Here is a 485-residue protein sequence, read N- to C-terminus: UDP-N-acetylmuramate--L-alanine ligase (485 aa).

112-118 (GTHGKTT) lines the ATP pocket.

The protein belongs to the MurCDEF family.

It is found in the cytoplasm. It carries out the reaction UDP-N-acetyl-alpha-D-muramate + L-alanine + ATP = UDP-N-acetyl-alpha-D-muramoyl-L-alanine + ADP + phosphate + H(+). It participates in cell wall biogenesis; peptidoglycan biosynthesis. Cell wall formation. The sequence is that of UDP-N-acetylmuramate--L-alanine ligase from Variovorax paradoxus (strain S110).